We begin with the raw amino-acid sequence, 526 residues long: Vitamin B6 transporter bsu1 (526 aa).

Residues 1-53 (MASKIASLFSPSETASKDQHENVAEDLELGTASSQSDGIHETNSEYDEKKREE) form a disordered region. Residues 38 to 53 (GIHETNSEYDEKKREE) show a composition bias toward basic and acidic residues. 12 helical membrane-spanning segments follow: residues 81–101 (WSIVFMFCLMQIYVIWTSNGF), 118–138 (VATLCLSMNILGSGLGPMFLG), 147–167 (KPVYFCSIFVYTVFNISCALP), 173–192 (MIISHFIIGVAGSTALTNVA), 204–224 (AGVPMSLFVWACAGGAIGAPM), 238–257 (WLYYINIIVGGFFLIVILII), 314–330 (LYNFYAYGISYFFLTAI), 349–366 (YLSGFVASTLLFLYQPIQ), 387–407 (FTSALFITLLFPAGMFLFAFT), 413–432 (PWMSPIVGNSMVTVANGHNW), 444–461 (PLLSGSAVAAFTLPSFIG), and 480–501 (WAVATMAFISISIPFIIYTFYF).

It belongs to the major facilitator superfamily. CAR1 family.

It is found in the membrane. In terms of biological role, thiamine-regulated, high affinity import carrier of pyridoxine, pyridoxal and pyridoxamine. Also imports, but does not export, amiloride and so confers sensitivity. This Schizosaccharomyces pombe (strain 972 / ATCC 24843) (Fission yeast) protein is Vitamin B6 transporter bsu1 (bsu1).